We begin with the raw amino-acid sequence, 332 residues long: Putative pumilio homolog 17 (332 aa).

The PUM-HD domain maps to 1-302; it reads MTNINRLSMS…ILTADLFYSL (302 aa). The stretch at 82–117 is one Pumilio 1 repeat; that stretch reads SDSDYFMVITRNKNGSKSLQKLMRMSDDMDVFFFVA. Residues 118–152 form a Pumilio 2; degenerate repeat; the sequence is IMRLFIHVMIDKYASYVAIQGMRIFKQDKRELMYD. Pumilio repeat units lie at residues 153-188, 189-225, 226-264, and 265-300; these read HILRYALFLARDQYGCIALNEIIKELDDPYYRDELM, DIVSNNALLLSNDAYGNFVVQHVLKLHDSRCTGNIAD, KLCGYCVELSFKKYGSYIVERLLEVRDIPMATIVLDLLA, and CKTEMLIRLARSENGNFVVCKLLELTNDILTADLFY.

It is found in the cytoplasm. In terms of biological role, sequence-specific RNA-binding protein that regulates translation and mRNA stability by binding the 3'-UTR of target mRNAs. The polypeptide is Putative pumilio homolog 17 (APUM17) (Arabidopsis thaliana (Mouse-ear cress)).